The following is a 397-amino-acid chain: DNA replication and repair protein RecF (397 aa).

30–37 provides a ligand contact to ATP; sequence GPNGQGKT.

Belongs to the RecF family.

It localises to the cytoplasm. Functionally, the RecF protein is involved in DNA metabolism; it is required for DNA replication and normal SOS inducibility. RecF binds preferentially to single-stranded, linear DNA. It also seems to bind ATP. This is DNA replication and repair protein RecF from Beutenbergia cavernae (strain ATCC BAA-8 / DSM 12333 / CCUG 43141 / JCM 11478 / NBRC 16432 / NCIMB 13614 / HKI 0122).